The primary structure comprises 215 residues: Fibrillarin-like rRNA/tRNA 2'-O-methyltransferase (215 aa).

Residues 1 to 29 (MKASSSLPDGVQRRQFDNRSRLTTHGTTV) are disordered. Residues 11 to 20 (VQRRQFDNRS) show a composition bias toward basic and acidic residues. Residues 76-77 (TT), 92-93 (EF), 117-118 (DA), and 138-141 (DVAT) each bind S-adenosyl-L-methionine.

This sequence belongs to the methyltransferase superfamily. Fibrillarin family. In terms of assembly, interacts with nop5. Component of box C/D small ribonucleoprotein (sRNP) particles that contain rpl7ae, FlpA and nop5, plus a guide RNA.

Involved in pre-rRNA and tRNA processing. Utilizes the methyl donor S-adenosyl-L-methionine to catalyze the site-specific 2'-hydroxyl methylation of ribose moieties in rRNA and tRNA. Site specificity is provided by a guide RNA that base pairs with the substrate. Methylation occurs at a characteristic distance from the sequence involved in base pairing with the guide RNA. This is Fibrillarin-like rRNA/tRNA 2'-O-methyltransferase from Haloquadratum walsbyi (strain DSM 16790 / HBSQ001).